Consider the following 130-residue polypeptide: MSMQDPLADMLTRIRNAQGVGKATVTMPSSKLKVSVAKVLSDEGYINGFSVSESPKQELTVELKYFEGKPVIAELDRVSRPGLRNYAGKSALPTVRGGLGIAIVSTSKGVMTDRAARAAGVGGEVLCTVF.

This sequence belongs to the universal ribosomal protein uS8 family. Part of the 30S ribosomal subunit. Contacts proteins S5 and S12.

One of the primary rRNA binding proteins, it binds directly to 16S rRNA central domain where it helps coordinate assembly of the platform of the 30S subunit. The sequence is that of Small ribosomal subunit protein uS8 from Cellvibrio japonicus (strain Ueda107) (Pseudomonas fluorescens subsp. cellulosa).